The sequence spans 653 residues: PAN2-PAN3 deadenylation complex subunit PAN3 (653 aa).

Disordered stretches follow at residues 1–21 (MASD…ENAK) and 45–128 (HDPN…AAPD). The C3H1-type zinc finger occupies 19–48 (NAKDTLCRNVTIYGRCRYEDKGCVYNHDPN). Residues 68–95 (SFTPSLLSSNGSSPTSSSATLKKTTTIS) are compositionally biased toward low complexity. Residues 108–119 (GISSRSNASTPS) are compositionally biased toward polar residues. Residues 256–516 (QTLPNTQLPA…TIDIFITGIS (261 aa)) form a pseudokinase domain region. ATP contacts are provided by residues R308, 357 to 364 (DYHPLSKT), and 416 to 417 (SK). Positions 517 to 555 (SQLMSTFDSALHMDDQLTSDLSRELENGRLVRLMTKLNF) form a coiled coil. Positions 556–653 (INERPEYEHD…ALLKPTRRVH (98 aa)) are knob domain.

This sequence belongs to the protein kinase superfamily. PAN3 family. In terms of assembly, homodimer. Forms a heterotrimer with a catalytic subunit pan2 to form the poly(A)-nuclease (PAN) deadenylation complex. Interacts (via PAM-2 motif) with poly(A)-binding protein pab1 (via PABC domain), conferring substrate specificity of the enzyme complex.

It localises to the cytoplasm. Regulatory subunit of the poly(A)-nuclease (PAN) deadenylation complex, one of two cytoplasmic mRNA deadenylases involved in mRNA turnover. PAN specifically shortens poly(A) tails of RNA and the activity is stimulated by poly(A)-binding protein pab1. PAN deadenylation is followed by rapid degradation of the shortened mRNA tails by the CCR4-NOT complex. Deadenylated mRNAs are then degraded by two alternative mechanisms, namely exosome-mediated 3'-5' exonucleolytic degradation, or deadenylation-dependent mRNA decaping and subsequent 5'-3' exonucleolytic degradation by xrn1. May also be involved in post-transcriptional maturation of mRNA poly(A) tails. pan3 acts as a positive regulator for PAN activity, recruiting the catalytic subunit pan2 to mRNA via its interaction with RNA and with pab1. This is PAN2-PAN3 deadenylation complex subunit PAN3 from Aspergillus terreus (strain NIH 2624 / FGSC A1156).